The chain runs to 290 residues: Membrane protein insertase YidC 2 (290 aa).

A signal peptide spans 1 to 19; sequence MKKKALLPLFLGIMIFLAG. The N-palmitoyl cysteine moiety is linked to residue Cys20. Cys20 carries the S-diacylglycerol cysteine lipid modification. The next 5 helical transmembrane spans lie at 56 to 76, 134 to 154, 176 to 196, 211 to 231, and 232 to 252; these read FGLA…PFML, MLGC…YFVL, PDIW…VVSS, MVIS…ALGL, and YWSV…IYYS. Positions 266-290 are disordered; it reads YEREHNPSSKKKGKNTQVVSKKNKK. Positions 280–290 are enriched in polar residues; that stretch reads NTQVVSKKNKK.

It belongs to the OXA1/ALB3/YidC family. Type 2 subfamily.

The protein localises to the cell membrane. Functionally, required for the insertion and/or proper folding and/or complex formation of integral membrane proteins into the membrane. Involved in integration of membrane proteins that insert both dependently and independently of the Sec translocase complex, as well as at least some lipoproteins. The chain is Membrane protein insertase YidC 2 from Staphylococcus epidermidis (strain ATCC 35984 / DSM 28319 / BCRC 17069 / CCUG 31568 / BM 3577 / RP62A).